A 502-amino-acid chain; its full sequence is Lysine--tRNA ligase (502 aa).

Mg(2+) contacts are provided by E398 and E405.

The protein belongs to the class-II aminoacyl-tRNA synthetase family. In terms of assembly, homodimer. It depends on Mg(2+) as a cofactor.

It localises to the cytoplasm. The enzyme catalyses tRNA(Lys) + L-lysine + ATP = L-lysyl-tRNA(Lys) + AMP + diphosphate. This is Lysine--tRNA ligase from Thermotoga sp. (strain RQ2).